The following is a 360-amino-acid chain: MDLGVFIPIGNNGWLISTASPQYKPTFELNKQIVQRAEHYGFEFALSMIKLRGFGGKSEFWDYNLESFTLMAGLAAVTSRIKLFASTAVLTLPPAIVARMATTIDSISGGRFGINIVSGWAKAEYEQMGLWPGDDYFGYRYAYSTEYVQVMQELWRTGASDFKGKYFQMTDCHMKPLPAHKIEIVAAGQSPTGMAFAATYADYNFVLASGVNTPTAHVKLNEQLLDAVAKTGRDVGAYVLFMVIADETDEAAMAKWQAYKDGTDVDALVWMADQGSKDQSAAGSSTAKTINLPEQALNFNMGTIVGSYATVARLLDEAASVPGTKGLMLTFDDFVQGIESFGQHVQPLMTSRAARLLPAA.

FMN is bound by residues 49-50 (IK), Asn-115, Glu-124, 140-141 (RY), and Ser-190.

This sequence belongs to the NtaA/SnaA/DszA monooxygenase family. RutA subfamily.

The catalysed reaction is uracil + FMNH2 + NADH + O2 = (Z)-3-ureidoacrylate + FMN + NAD(+) + H2O + H(+). It catalyses the reaction thymine + FMNH2 + NADH + O2 = (Z)-2-methylureidoacrylate + FMN + NAD(+) + H2O + H(+). Catalyzes the pyrimidine ring opening between N-3 and C-4 by an unusual flavin hydroperoxide-catalyzed mechanism, adding oxygen atoms in the process to yield ureidoacrylate peracid, that immediately reacts with FMN forming ureidoacrylate and FMN-N(5)-oxide. The FMN-N(5)-oxide reacts spontaneously with NADH to produce FMN. Requires the flavin reductase RutF to regenerate FMN in vivo. The chain is Pyrimidine monooxygenase RutA from Bradyrhizobium sp. (strain BTAi1 / ATCC BAA-1182).